Consider the following 442-residue polypeptide: Chromosomal replication initiator protein DnaA (442 aa).

The domain I, interacts with DnaA modulators stretch occupies residues 1-84 (MSVLWSHCIS…LEIGSRAAEA (84 aa)). Residues 84–105 (AAQMRSANPPRKTAPARKQVPN) form a domain II region. Positions 106–322 (NLNSAFIFGN…GALRRVIANA (217 aa)) are domain III, AAA+ region. ATP-binding residues include glycine 150, glycine 152, lysine 153, and threonine 154. Residues 323-442 (QFTGRPITLE…FSNLLRILSN (120 aa)) are domain IV, binds dsDNA.

Belongs to the DnaA family. Oligomerizes as a right-handed, spiral filament on DNA at oriC.

It is found in the cytoplasm. Plays an essential role in the initiation and regulation of chromosomal replication. ATP-DnaA binds to the origin of replication (oriC) to initiate formation of the DNA replication initiation complex once per cell cycle. Binds the DnaA box (a 9 base pair repeat at the origin) and separates the double-stranded (ds)DNA. Forms a right-handed helical filament on oriC DNA; dsDNA binds to the exterior of the filament while single-stranded (ss)DNA is stabiized in the filament's interior. The ATP-DnaA-oriC complex binds and stabilizes one strand of the AT-rich DNA unwinding element (DUE), permitting loading of DNA polymerase. After initiation quickly degrades to an ADP-DnaA complex that is not apt for DNA replication. Binds acidic phospholipids. In Methylococcus capsulatus (strain ATCC 33009 / NCIMB 11132 / Bath), this protein is Chromosomal replication initiator protein DnaA.